The chain runs to 125 residues: uncharacterized protein (125 aa).

It localises to the plastid. Its subcellular location is the chloroplast. This is an uncharacterized protein from Guillardia theta (Cryptophyte).